The following is a 353-amino-acid chain: Photosystem II protein D1 (353 aa).

Position 2 is an N-acetylthreonine (threonine 2). Threonine 2 is modified (phosphothreonine). 3 helical membrane-spanning segments follow: residues 29–46, 118–133, and 142–156; these read YIGW…TAIS, HFLL…EWEL, and WIAV…AATA. Histidine 118 is a chlorophyll a binding site. Pheophytin a is bound at residue tyrosine 126. [CaMn4O5] cluster contacts are provided by aspartate 170 and glutamate 189. The helical transmembrane segment at 197–218 threads the bilayer; it reads FHMLGVAGVFGGSLFSAMHGSL. Histidine 198 serves as a coordination point for chlorophyll a. A quinone contacts are provided by residues histidine 215 and 264 to 265; that span reads SF. Fe cation is bound at residue histidine 215. Histidine 272 serves as a coordination point for Fe cation. The chain crosses the membrane as a helical span at residues 274–288; the sequence is FLAVWPVVGIWFTAM. [CaMn4O5] cluster-binding residues include histidine 332, glutamate 333, aspartate 342, and alanine 344. A propeptide spanning residues 345 to 353 is cleaved from the precursor; it reads SVEAPAVNG.

Belongs to the reaction center PufL/M/PsbA/D family. In terms of assembly, PSII is composed of 1 copy each of membrane proteins PsbA, PsbB, PsbC, PsbD, PsbE, PsbF, PsbH, PsbI, PsbJ, PsbK, PsbL, PsbM, PsbT, PsbX, PsbY, PsbZ, Psb30/Ycf12, at least 3 peripheral proteins of the oxygen-evolving complex and a large number of cofactors. It forms dimeric complexes. The D1/D2 heterodimer binds P680, chlorophylls that are the primary electron donor of PSII, and subsequent electron acceptors. It shares a non-heme iron and each subunit binds pheophytin, quinone, additional chlorophylls, carotenoids and lipids. D1 provides most of the ligands for the Mn4-Ca-O5 cluster of the oxygen-evolving complex (OEC). There is also a Cl(-1) ion associated with D1 and D2, which is required for oxygen evolution. The PSII complex binds additional chlorophylls, carotenoids and specific lipids. serves as cofactor. In terms of processing, tyr-161 forms a radical intermediate that is referred to as redox-active TyrZ, YZ or Y-Z. C-terminally processed by CTPA; processing is essential to allow assembly of the oxygen-evolving complex and thus photosynthetic growth.

It is found in the plastid. It localises to the chloroplast thylakoid membrane. The enzyme catalyses 2 a plastoquinone + 4 hnu + 2 H2O = 2 a plastoquinol + O2. Photosystem II (PSII) is a light-driven water:plastoquinone oxidoreductase that uses light energy to abstract electrons from H(2)O, generating O(2) and a proton gradient subsequently used for ATP formation. It consists of a core antenna complex that captures photons, and an electron transfer chain that converts photonic excitation into a charge separation. The D1/D2 (PsbA/PsbD) reaction center heterodimer binds P680, the primary electron donor of PSII as well as several subsequent electron acceptors. This is Photosystem II protein D1 from Mesostigma viride (Green alga).